The chain runs to 421 residues: Carboxypeptidase A4 (421 aa).

The N-terminal stretch at 1 to 16 (MRWILFIGALIGSSIC) is a signal peptide. Positions 17–113 (GQEKFFGDQV…EMQHNEGQER (97 aa)) are cleaved as a propeptide — activation peptide. A protein is bound by residues Pro-69, Val-71, Asn-119, Tyr-123, His-124, Ser-125, Glu-127, and Phe-163. The region spanning 122 to 416 (AYHSLEAIYH…LGLKTIMEHV (295 aa)) is the Peptidase M14 domain. Residues His-181 and Glu-184 each coordinate Zn(2+). A protein is bound by residues Arg-196, Lys-197, and Ser-248. A disulfide bridge links Cys-250 with Cys-273. The N-linked (GlcNAc...) asparagine glycan is linked to Asn-260. Asp-270 is an a protein binding site. His-308 lines the Zn(2+) pocket. Glu-382 (proton donor/acceptor) is an active-site residue.

The protein belongs to the peptidase M14 family. As to quaternary structure, monomer. Interacts with LXN. The cofactor is Zn(2+). As to expression, fetal expression in the adrenal gland, brain, heart, intestine, kidney, liver and lung. Except for fetal brain that shows no imprinting, expression was found preferentially from the maternal allele.

It localises to the secreted. Inhibited by interaction with the metallocarboxypeptidase inhibitor (MCPI) from N.versicolor that binds to the catalytic zinc ion. Also inhibited by interaction with the S.magnifica carboxypeptidase inhibitor SmCI that penetrates the active site groove and inhibits activity by emulating a C-terminal substrate. Additionally inhibited by a carboxypeptidase inhibitor from H.medicinalis (leech) and R.bursa (tick). Metalloprotease that cleaves hydrophobic C-terminal residues with a preference for -Phe, -Leu, -Ile, -Met, -Tyr and -Val. May function in peptide hormone and/or neuropeptide catabolism. The sequence is that of Carboxypeptidase A4 (CPA4) from Homo sapiens (Human).